We begin with the raw amino-acid sequence, 144 residues long: uncharacterized protein (144 aa).

The span at 124–133 (KALNRKKSKT) shows a compositional bias: basic residues. A disordered region spans residues 124–144 (KALNRKKSKTKNGEKNGEGKS). Over residues 134 to 144 (KNGEKNGEGKS) the composition is skewed to basic and acidic residues.

This is an uncharacterized protein from Acidianus filamentous virus 1 (isolate United States/Yellowstone) (AFV-1).